The following is a 158-amino-acid chain: Transcription elongation factor GreB (158 aa).

The stretch at 53–75 (KRRLREIDRRVRFLTKRLEVLQI) forms a coiled coil.

The protein belongs to the GreA/GreB family. GreB subfamily.

Functionally, necessary for efficient RNA polymerase transcription elongation past template-encoded arresting sites. The arresting sites in DNA have the property of trapping a certain fraction of elongating RNA polymerases that pass through, resulting in locked ternary complexes. Cleavage of the nascent transcript by cleavage factors such as GreA or GreB allows the resumption of elongation from the new 3'terminus. GreB releases sequences of up to 9 nucleotides in length. This Haemophilus influenzae (strain ATCC 51907 / DSM 11121 / KW20 / Rd) protein is Transcription elongation factor GreB.